The primary structure comprises 222 residues: Collectrin (222 aa).

The first 14 residues, 1–14 (MLWLLFFLVTAIHA), serve as a signal peptide directing secretion. Topologically, residues 15–141 (ELCQPGAENA…LAPPMDPSVP (127 aa)) are extracellular. The region spanning 21 to 222 (AENAFKVRLS…MTEDERLTPL (202 aa)) is the Collectrin-like domain. N-linked (GlcNAc...) asparagine glycosylation is found at Asn76 and Asn93. A helical membrane pass occupies residues 142–162 (IWIIIFGVIFCIIIVAIALLI). Over 163-222 (LSGIWQRRRKNKEPSEVDDAEDKCENMITIENGIPSDPLDMKGGHINDAFMTEDERLTPL) the chain is Cytoplasmic. 2 positions are modified to phosphothreonine: Thr214 and Thr220.

It belongs to the CLTRN family. In terms of assembly, monomer. Homodimer; dimerization prevents CLTRN cleavage by BACE2. Interacts with SLC6A18; this interaction regulates the trafficking of SLC6A18 to the cell membrane and its amino acid transporter activity. Interacts with SLC6A19; this interaction regulates the trafficking of SLC6A19 to the cell membrane and its amino acid transporter activity. Interacts with SNAPIN. Glycosylated. Glycosylation is required for plasma membrane localization and for its cleavage by BACE2. In terms of processing, proteolytically processed in pancreatic beta cells by BACE2 leading to the generation and extracellular release of soluble CLTRN, and a corresponding cell-associated C-terminal fragment which is later cleaved by gamma-secretase. This shedding process inactivates CLTRN. Three cleavage sites have been identified for BACE2, two clustered sites after Phe-116 and Leu-118 and a more membrane proximal site at Phe-125; the preferred BACE2 cleavage site seems to be between Phe-125 and Leu-126, Phe-116 and Leu-118 act as alternative sites. In terms of tissue distribution, kidney; collecting ducts. Pancreas; beta cells of islets.

The protein resides in the cell membrane. Plays an important role in amino acid transport by acting as binding partner of amino acid transporters SLC6A18 and SLC6A19, regulating their trafficking on the cell surface and their amino acid transporter activity. May also play a role in trafficking of amino acid transporters SLC3A1 and SLC7A9 to the renal cortical cell membrane. Regulator of SNARE complex function. Stimulator of beta cell replication. This chain is Collectrin, found in Homo sapiens (Human).